We begin with the raw amino-acid sequence, 156 residues long: SsrA-binding protein (156 aa).

Belongs to the SmpB family.

It localises to the cytoplasm. In terms of biological role, required for rescue of stalled ribosomes mediated by trans-translation. Binds to transfer-messenger RNA (tmRNA), required for stable association of tmRNA with ribosomes. tmRNA and SmpB together mimic tRNA shape, replacing the anticodon stem-loop with SmpB. tmRNA is encoded by the ssrA gene; the 2 termini fold to resemble tRNA(Ala) and it encodes a 'tag peptide', a short internal open reading frame. During trans-translation Ala-aminoacylated tmRNA acts like a tRNA, entering the A-site of stalled ribosomes, displacing the stalled mRNA. The ribosome then switches to translate the ORF on the tmRNA; the nascent peptide is terminated with the 'tag peptide' encoded by the tmRNA and targeted for degradation. The ribosome is freed to recommence translation, which seems to be the essential function of trans-translation. The chain is SsrA-binding protein from Maricaulis maris (strain MCS10) (Caulobacter maris).